Consider the following 232-residue polypeptide: dTTP/UTP pyrophosphatase (232 aa).

The active-site Proton acceptor is aspartate 103.

It belongs to the Maf family. YhdE subfamily. The cofactor is a divalent metal cation.

Its subcellular location is the cytoplasm. The catalysed reaction is dTTP + H2O = dTMP + diphosphate + H(+). It catalyses the reaction UTP + H2O = UMP + diphosphate + H(+). It carries out the reaction 5-methyl-UTP + H2O = 5-methyl-UMP + diphosphate + H(+). The enzyme catalyses psi-UTP + H2O = psi-UMP + diphosphate + H(+). Its function is as follows. Nucleoside triphosphate pyrophosphatase that hydrolyzes dTTP and UTP. Can also hydrolyze the modified nucleotides 5-methyl-UTP (m(5)UTP) and pseudo-UTP. Has weak activity with CTP. May have a dual role in cell division arrest and in preventing the incorporation of modified nucleotides into cellular nucleic acids. This Saccharomyces cerevisiae (strain ATCC 204508 / S288c) (Baker's yeast) protein is dTTP/UTP pyrophosphatase.